Here is a 434-residue protein sequence, read N- to C-terminus: Angio-associated migratory cell protein (434 aa).

A disordered region spans residues 1–63 (MESESESGAA…EEEEEEGNEE (63 aa)). Serine 20 is modified (phosphoserine). Residues 39–62 (DPDDLAQEMEDVDFEEEEEEEGNE) show a composition bias toward acidic residues. 8 WD repeats span residues 89 to 129 (LHSA…LLFE), 132 to 171 (GHKD…EVWS), 173 to 212 (EAGD…KTFQ), 214 to 254 (PNCP…HVLK), 258 to 299 (GHQG…GVFR), 315 to 354 (SESN…LRHQ), 356 to 395 (QHQS…LLTD), and 398 to 433 (GHTA…QRPD).

As to expression, expressed in metastatic melanoma, liver, skin, kidney, heart, lung, lymph node, skeletal muscle and brain, and also in A2058 melanoma cells and activated T-cells (at protein level). Expressed in blood vessels. Strongly expressed in endothelial cells, cytotrophoblasts, and poorly differentiated. colon adenocarcinoma cells found in lymphatics.

The protein resides in the cell membrane. The protein localises to the cytoplasm. Plays a role in angiogenesis and cell migration. In smooth muscle cell migration, may act through the RhoA pathway. The polypeptide is Angio-associated migratory cell protein (AAMP) (Homo sapiens (Human)).